The sequence spans 612 residues: Threonine--tRNA ligase (612 aa).

The tract at residues asparagine 218–proline 509 is catalytic. Residues cysteine 310, histidine 361, and histidine 486 each coordinate Zn(2+).

It belongs to the class-II aminoacyl-tRNA synthetase family. In terms of assembly, homodimer. Zn(2+) is required as a cofactor.

It is found in the cytoplasm. It catalyses the reaction tRNA(Thr) + L-threonine + ATP = L-threonyl-tRNA(Thr) + AMP + diphosphate + H(+). In terms of biological role, catalyzes the attachment of threonine to tRNA(Thr) in a two-step reaction: L-threonine is first activated by ATP to form Thr-AMP and then transferred to the acceptor end of tRNA(Thr). Also edits incorrectly charged L-seryl-tRNA(Thr). This Helicobacter pylori (strain Shi470) protein is Threonine--tRNA ligase.